The following is a 297-amino-acid chain: NADH-ubiquinone oxidoreductase chain 1 (297 aa).

Transmembrane regions (helical) follow at residues 1 to 21, 34 to 54, 66 to 86, 99 to 119, 139 to 159, 170 to 190, 206 to 228, 235 to 257, and 277 to 297; these read MKSLIVALAIVLAVAFMTLAE, PNHVGFLGLLQPFADGIKLIL, WLFVLAPFLSFYLALLNWLVI, LSILLILAISSLGVYAIIYTG, VSYEIAMSLLVLTVVYMGATL, GTVLLWSLWPMAMIGFVAALA, LVAGFMTEHSAISFTFLFLGEYA, TVLNLMFLGFYNPLVIYLFIWIR, and LPFLIGFLMIQPSTLFVLDLF.

Belongs to the complex I subunit 1 family.

It localises to the mitochondrion inner membrane. It carries out the reaction a ubiquinone + NADH + 5 H(+)(in) = a ubiquinol + NAD(+) + 4 H(+)(out). In terms of biological role, core subunit of the mitochondrial membrane respiratory chain NADH dehydrogenase (Complex I) that is believed to belong to the minimal assembly required for catalysis. Complex I functions in the transfer of electrons from NADH to the respiratory chain. The immediate electron acceptor for the enzyme is believed to be ubiquinone. The protein is NADH-ubiquinone oxidoreductase chain 1 of Hyaloraphidium curvatum (Lower fungus).